A 1330-amino-acid chain; its full sequence is G2/mitotic-specific cyclin-B3 (1330 aa).

The tract at residues 1–50 is disordered; sequence MPLPLPSRSSKPETKKSRSSKIVPSGNNGQSEKRGENYQEKISSSSPRRL. The span at 20-30 shows a compositional bias: polar residues; sequence SKIVPSGNNGQ. The D-box signature appears at 54–62; it reads RSAFEDLTN. The disordered stretch occupies residues 1002-1059; that stretch reads VETSSRVPSTPPESRAGMSSVGKLSTTSKSSVCESSSNKPSSSWGESSQKEMTPLEDI. Residues 1026–1048 show a composition bias toward low complexity; sequence STTSKSSVCESSSNKPSSSWGES.

It belongs to the cyclin family. Cyclin AB subfamily. Interacts with CDK2 kinase. In terms of processing, ubiquitinated. Ubiquitination leads to its degradation during anaphase entry, after degradation of CCNB1.

The protein resides in the nucleus. Its function is as follows. Cyclins are positive regulatory subunits of the cyclin-dependent kinases (CDKs), and thereby play an essential role in the control of the cell cycle, notably via their destruction during cell division. Its tissue specificity suggest that it may be required during early meiotic prophase I. The protein is G2/mitotic-specific cyclin-B3 (CCNB3) of Canis lupus familiaris (Dog).